Consider the following 598-residue polypeptide: Probable translation initiation factor IF-2 (598 aa).

Residues 3–225 (LRCPIVSVLG…GLAQKFLEQK (223 aa)) form the tr-type G domain. A G1 region spans residues 12-19 (GHVDHGKT). 12–19 (GHVDHGKT) is a binding site for GTP. The G2 stretch occupies residues 37–41 (GITQH). Residues 76–79 (DTPG) form a G3 region. Residues 76-80 (DTPGH) and 130-133 (NKVD) contribute to the GTP site. The segment at 130 to 133 (NKVD) is G4. A G5 region spans residues 200–202 (SAM).

It belongs to the TRAFAC class translation factor GTPase superfamily. Classic translation factor GTPase family. IF-2 subfamily.

Function in general translation initiation by promoting the binding of the formylmethionine-tRNA to ribosomes. Seems to function along with eIF-2. The chain is Probable translation initiation factor IF-2 from Methanococcus maripaludis (strain C7 / ATCC BAA-1331).